The primary structure comprises 138 residues: uncharacterized protein (138 aa).

Disordered stretches follow at residues 1-23 (MPESAPSTPPSVNRRHEPEMLSE) and 35-83 (ASPS…EDPV). Acidic residues predominate over residues 60–69 (DEETIPEEDD).

This is an uncharacterized protein from Schizosaccharomyces pombe (strain 972 / ATCC 24843) (Fission yeast).